A 230-amino-acid chain; its full sequence is LexA repressor (230 aa).

Residues 1–21 (MSDDSSETRTGGRRGADAGLT) form a disordered region. The segment at residues 44–64 (IREIGDAVGLTSTSSVAHQLR) is a DNA-binding region (H-T-H motif). Catalysis depends on for autocatalytic cleavage activity residues Ser154 and Lys191.

The protein belongs to the peptidase S24 family. Homodimer.

The catalysed reaction is Hydrolysis of Ala-|-Gly bond in repressor LexA.. Represses a number of genes involved in the response to DNA damage (SOS response), including recA and lexA. In the presence of single-stranded DNA, RecA interacts with LexA causing an autocatalytic cleavage which disrupts the DNA-binding part of LexA, leading to derepression of the SOS regulon and eventually DNA repair. This Mycobacterium sp. (strain JLS) protein is LexA repressor.